The primary structure comprises 154 residues: Deoxyuridine 5'-triphosphate nucleotidohydrolase (154 aa).

Substrate contacts are provided by residues 64–66 (RSG), N77, 81–83 (TID), and K91.

Belongs to the dUTPase family. As to quaternary structure, homotrimer. Mg(2+) serves as cofactor.

The catalysed reaction is dUTP + H2O = dUMP + diphosphate + H(+). Its pathway is pyrimidine metabolism; dUMP biosynthesis; dUMP from dCTP (dUTP route): step 2/2. Functionally, this enzyme is involved in nucleotide metabolism: it produces dUMP, the immediate precursor of thymidine nucleotides and it decreases the intracellular concentration of dUTP so that uracil cannot be incorporated into DNA. This Mycobacterium sp. (strain JLS) protein is Deoxyuridine 5'-triphosphate nucleotidohydrolase.